We begin with the raw amino-acid sequence, 98 residues long: Citrate lyase acyl carrier protein (98 aa).

Ser14 carries the post-translational modification O-(phosphoribosyl dephospho-coenzyme A)serine.

Belongs to the CitD family. Oligomer with a subunit composition of (alpha,beta,gamma)6.

It localises to the cytoplasm. Covalent carrier of the coenzyme of citrate lyase. This is Citrate lyase acyl carrier protein from Shigella flexneri.